We begin with the raw amino-acid sequence, 863 residues long: DNA mismatch repair protein MutS (863 aa).

Gly-617–Ser-624 contributes to the ATP binding site.

This sequence belongs to the DNA mismatch repair MutS family.

Its function is as follows. This protein is involved in the repair of mismatches in DNA. It is possible that it carries out the mismatch recognition step. This protein has a weak ATPase activity. This chain is DNA mismatch repair protein MutS, found in Pseudomonas fluorescens (strain SBW25).